The following is a 174-amino-acid chain: MAINGRYFVQFRRRREGRTDYYQRQRLIVSGRNRMVVRKTNRHIIIQLIAAQMDGDYTLVHVNSRELVNFGYKGYLGNTPAAYLTGMLFAVRAQKAGYEGGIADIGLQVASTGARVFAAIKGAVDAGFDVPVGEAILPDDDRCNGAHIAEYDERFAGLVENVEATKDAIMKELE.

This sequence belongs to the universal ribosomal protein uL18 family. Part of the 50S ribosomal subunit. Contacts the 5S and 23S rRNAs.

In terms of biological role, this is one of the proteins that bind and probably mediate the attachment of the 5S RNA into the large ribosomal subunit, where it forms part of the central protuberance. This chain is Large ribosomal subunit protein uL18, found in Methanocorpusculum labreanum (strain ATCC 43576 / DSM 4855 / Z).